The primary structure comprises 95 residues: Ribonuclease P protein component 1 (95 aa).

Belongs to the eukaryotic/archaeal RNase P protein component 1 family. Consists of a catalytic RNA component and at least 4 protein subunits. Forms a subcomplex with Rnp4 which stimulates the catalytic RNA.

It is found in the cytoplasm. The enzyme catalyses Endonucleolytic cleavage of RNA, removing 5'-extranucleotides from tRNA precursor.. Functionally, part of ribonuclease P, a protein complex that generates mature tRNA molecules by cleaving their 5'-ends. The protein is Ribonuclease P protein component 1 of Methanocaldococcus jannaschii (strain ATCC 43067 / DSM 2661 / JAL-1 / JCM 10045 / NBRC 100440) (Methanococcus jannaschii).